A 289-amino-acid chain; its full sequence is Esterase GA18864 (289 aa).

Low complexity predominate over residues 1–19 (MTNNDAAVEAPSSSRASSS). Positions 1–24 (MTNNDAAVEAPSSSRASSSKQQPK) are disordered. Catalysis depends on charge relay system residues Ser-133, Asp-191, and His-218. The tract at residues 253–289 (VSFIESGAEDNDDDGDANDAEVAAATAAAGSDLDDSD) is disordered. Acidic residues predominate over residues 259 to 271 (GAEDNDDDGDAND). The span at 272-283 (AEVAAATAAAGS) shows a compositional bias: low complexity.

It belongs to the LovG family.

The sequence is that of Esterase GA18864 from Drosophila pseudoobscura pseudoobscura (Fruit fly).